The primary structure comprises 537 residues: Actin-histidine N-methyltransferase (537 aa).

A compositionally biased stretch (basic residues) spans 1–12 (MGKNTKRNKKTK). A disordered region spans residues 1 to 50 (MGKNTKRNKKTKQQQQQPQQNGVTASASGTAVEDFEDQQAASSLPSLNGK). S-adenosyl-L-methionine is bound by residues arginine 114, 143-145 (YQL), arginine 299, 325-329 (DMANH), and 375-377 (NGF). Positions 133 to 364 (EGLEIAIFPG…TGEQFFIYYG (232 aa)) constitute an SET domain.

Belongs to the class V-like SAM-binding methyltransferase superfamily. SETD3 actin-histidine methyltransferase family.

It is found in the cytoplasm. The protein resides in the nucleus. The enzyme catalyses L-histidyl-[protein] + S-adenosyl-L-methionine = N(tele)-methyl-L-histidyl-[protein] + S-adenosyl-L-homocysteine + H(+). Its function is as follows. Protein-histidine N-methyltransferase that specifically mediates 3-methylhistidine (tele-methylhistidine) methylation of actin at 'His-74'. This is Actin-histidine N-methyltransferase from Drosophila melanogaster (Fruit fly).